Consider the following 262-residue polypeptide: Serine/arginine-rich splicing factor 10 (262 aa).

The RRM domain maps to 10–88 (TSLFVRNVAD…RQIEIQFAQG (79 aa)). Phosphoserine is present on residues S23, S106, and S108. Basic and acidic residues predominate over residues 116 to 126 (YRRSRSRSYER). The disordered stretch occupies residues 116–262 (YRRSRSRSYE…SWTSPKSSGH (147 aa)). 3 positions are modified to phosphoserine: S129, S131, and S133. Low complexity predominate over residues 134 to 150 (FDYNYRRSYSPRNSRPT). Phosphoserine occurs at positions 158, 160, and 168. Composition is skewed to basic residues over residues 165-186 (FKHR…SKSQ) and 194-207 (KSRS…KTRG). The span at 209-234 (SKTDSKTHYKSGSRYEKESRKKEPPR) shows a compositional bias: basic and acidic residues. The segment covering 252-262 (RSWTSPKSSGH) has biased composition (low complexity).

It belongs to the splicing factor SR family. The phosphorylated but not the dephosphorylated form interacts with TRA2B/SFRS10. The dephosphorylated form interacts with SNRNP70. Isoform 1 interacts with FUS C-terminus. Isoform 3 interacts with FUS C-terminus. Interacts with YTHDC1, leading to inhibit RNA-binding activity of SRSF10. Post-translationally, phosphorylated. Fully dephosphorylated in mitosis and partially dephosphorylated on heat shock. Widely expressed.

The protein resides in the nucleus speckle. It is found in the cytoplasm. Functionally, splicing factor that in its dephosphorylated form acts as a general repressor of pre-mRNA splicing. Seems to interfere with the U1 snRNP 5'-splice recognition of SNRNP70. Required for splicing repression in M-phase cells and after heat shock. Also acts as a splicing factor that specifically promotes exon skipping during alternative splicing. Interaction with YTHDC1, a RNA-binding protein that recognizes and binds N6-methyladenosine (m6A)-containing RNAs, prevents SRSF10 from binding to its mRNA-binding sites close to m6A-containing regions, leading to inhibit exon skipping during alternative splicing. May be involved in regulation of alternative splicing in neurons, with isoform 1 acting as a positive and isoform 3 as a negative regulator. In Homo sapiens (Human), this protein is Serine/arginine-rich splicing factor 10 (SRSF10).